We begin with the raw amino-acid sequence, 295 residues long: Mycothiol acetyltransferase (295 aa).

N-acetyltransferase domains are found at residues 5–141 and 149–295; these read VEIR…TPLP and VRLR…MYRR. Glu-35 is a binding site for 1D-myo-inositol 2-(L-cysteinylamino)-2-deoxy-alpha-D-glucopyranoside. 76–78 contacts acetyl-CoA; it reads LVV. The 1D-myo-inositol 2-(L-cysteinylamino)-2-deoxy-alpha-D-glucopyranoside site is built by Glu-176, Lys-215, and Glu-229. Acetyl-CoA-binding positions include 233–235 and 240–246; these read VGV and RGTGLGR. A 1D-myo-inositol 2-(L-cysteinylamino)-2-deoxy-alpha-D-glucopyranoside-binding site is contributed by Tyr-267. 272 to 277 contributes to the acetyl-CoA binding site; the sequence is NTAAVR.

It belongs to the acetyltransferase family. MshD subfamily. In terms of assembly, monomer.

It carries out the reaction 1D-myo-inositol 2-(L-cysteinylamino)-2-deoxy-alpha-D-glucopyranoside + acetyl-CoA = mycothiol + CoA + H(+). Catalyzes the transfer of acetyl from acetyl-CoA to desacetylmycothiol (Cys-GlcN-Ins) to form mycothiol. The chain is Mycothiol acetyltransferase from Thermobispora bispora (strain ATCC 19993 / DSM 43833 / CBS 139.67 / JCM 10125 / KCTC 9307 / NBRC 14880 / R51).